The primary structure comprises 306 residues: Aspartate carbamoyltransferase catalytic subunit (306 aa).

2 residues coordinate carbamoyl phosphate: Arg-55 and Thr-56. An L-aspartate-binding site is contributed by Lys-84. The carbamoyl phosphate site is built by Arg-105, His-133, and Gln-136. The L-aspartate site is built by Arg-166 and Arg-227. Carbamoyl phosphate contacts are provided by Leu-265 and Pro-266.

This sequence belongs to the aspartate/ornithine carbamoyltransferase superfamily. ATCase family. In terms of assembly, heterododecamer (2C3:3R2) of six catalytic PyrB chains organized as two trimers (C3), and six regulatory PyrI chains organized as three dimers (R2).

The catalysed reaction is carbamoyl phosphate + L-aspartate = N-carbamoyl-L-aspartate + phosphate + H(+). Its pathway is pyrimidine metabolism; UMP biosynthesis via de novo pathway; (S)-dihydroorotate from bicarbonate: step 2/3. Functionally, catalyzes the condensation of carbamoyl phosphate and aspartate to form carbamoyl aspartate and inorganic phosphate, the committed step in the de novo pyrimidine nucleotide biosynthesis pathway. The protein is Aspartate carbamoyltransferase catalytic subunit of Neisseria gonorrhoeae (strain ATCC 700825 / FA 1090).